A 411-amino-acid polypeptide reads, in one-letter code: LL-diaminopimelate aminotransferase (411 aa).

2 residues coordinate substrate: Tyr-15 and Gly-42. Pyridoxal 5'-phosphate-binding positions include Tyr-72, 108 to 109 (SK), Tyr-132, Asn-187, Tyr-218, and 246 to 248 (SFS). The substrate site is built by Lys-109, Tyr-132, and Asn-187. An N6-(pyridoxal phosphate)lysine modification is found at Lys-249. Residues Arg-257 and Asn-292 each contribute to the pyridoxal 5'-phosphate site. 2 residues coordinate substrate: Asn-292 and Arg-388.

It belongs to the class-I pyridoxal-phosphate-dependent aminotransferase family. LL-diaminopimelate aminotransferase subfamily. As to quaternary structure, homodimer. Requires pyridoxal 5'-phosphate as cofactor.

It carries out the reaction (2S,6S)-2,6-diaminopimelate + 2-oxoglutarate = (S)-2,3,4,5-tetrahydrodipicolinate + L-glutamate + H2O + H(+). It functions in the pathway amino-acid biosynthesis; L-lysine biosynthesis via DAP pathway; LL-2,6-diaminopimelate from (S)-tetrahydrodipicolinate (aminotransferase route): step 1/1. Its function is as follows. Involved in the synthesis of meso-diaminopimelate (m-DAP or DL-DAP), required for both lysine and peptidoglycan biosynthesis. Catalyzes the direct conversion of tetrahydrodipicolinate to LL-diaminopimelate. The sequence is that of LL-diaminopimelate aminotransferase from Nostoc punctiforme (strain ATCC 29133 / PCC 73102).